The sequence spans 221 residues: Potassium voltage-gated channel subfamily E member 4 (221 aa).

Topologically, residues 1-86 (MHFLTIYPNC…AGGGSGNGNE (86 aa)) are extracellular. The N-linked (GlcNAc...) asparagine glycan is linked to Asn-9. Positions 58–72 (LNSTHPGTAASSSPL) are enriched in polar residues. The tract at residues 58–77 (LNSTHPGTAASSSPLESRAA) is disordered. Residues 87–107 (YFYILVVMSFYGIFLIGIMLG) traverse the membrane as a helical segment. The Cytoplasmic portion of the chain corresponds to 108-221 (YMKSKRREKK…GSSENIHQNS (114 aa)). Residues 175–221 (SVSSESSSPDVHLTIQEEGADDELEETSETPLNESSEGSSENIHQNS) form a disordered region. Positions 192 to 202 (EGADDELEETS) are enriched in acidic residues. Polar residues predominate over residues 203-221 (ETPLNESSEGSSENIHQNS).

It belongs to the potassium channel KCNE family. In terms of assembly, forms heterooligomers with KCNA3, inhibiting its activity by impairing localization to the cell membrane. The stoichiometry of KCNA3 and KCNE4 in the heterooligomers are 4:1, 4:2, 4:3 or 4:4 respectively. Increasing the number of KCNE4 subunits steadily slows the activation KCNA3 and decreases its abundance at the cell membrane. However, a single subunit of KCNE4 is sufficient for the cooperative enhancement of the inactivating function of the channel. However, a single subunit of KCNE4 is sufficient for the cooperative enhancement of the inactivating function of the channel. Interacts with KCNQ1; impairs KCNQ1 localization in lipid rafts and inhibits voltage-gated potassium channel activity. In terms of tissue distribution, predominantly expressed in embryo and adult uterus. Low expression found in kidney, small intestine, lung and heart. As to expression, detected in kidney, thymus, and uterus (at protein level).

It localises to the membrane. Ancillary protein that functions as a regulatory subunit of the voltage-gated potassium (Kv) channel complex composed of pore-forming and potassium-conducting alpha subunits and of regulatory beta subunits. KCNE4 beta subunit modulates the gating kinetics and enhances stability of the channel complex. Associates with KCNQ1/KVLTQ1 alpha subunit to inhibit potassium currents. In terms of biological role, may inhibit KCNQ4-mediated potassium currents. The polypeptide is Potassium voltage-gated channel subfamily E member 4 (Homo sapiens (Human)).